Reading from the N-terminus, the 457-residue chain is Bifunctional protein GlmU (457 aa).

The tract at residues 1 to 230 is pyrophosphorylase; sequence MPLSLPLHIV…AQEVEGVNDL (230 aa). UDP-N-acetyl-alpha-D-glucosamine is bound by residues 12 to 15, Lys-26, Gln-78, 83 to 84, 105 to 107, Gly-140, Glu-155, Asn-170, and Asn-228; these read LAAG, GT, and YGD. Residue Asp-107 participates in Mg(2+) binding. Asn-228 lines the Mg(2+) pocket. The segment at 231–251 is linker; that stretch reads WQLTQLERAWQIRAARALCLQ. The tract at residues 252-457 is N-acetyltransferase; it reads GARVADPARL…DGWQRPKKKT (206 aa). Arg-334 and Lys-352 together coordinate UDP-N-acetyl-alpha-D-glucosamine. His-364 (proton acceptor) is an active-site residue. Tyr-367 and Asn-378 together coordinate UDP-N-acetyl-alpha-D-glucosamine. Residues Ala-381, 387–388, Ser-406, Ala-424, and Arg-441 contribute to the acetyl-CoA site; that span reads NY.

The protein in the N-terminal section; belongs to the N-acetylglucosamine-1-phosphate uridyltransferase family. This sequence in the C-terminal section; belongs to the transferase hexapeptide repeat family. As to quaternary structure, homotrimer. Requires Mg(2+) as cofactor.

It localises to the cytoplasm. It carries out the reaction alpha-D-glucosamine 1-phosphate + acetyl-CoA = N-acetyl-alpha-D-glucosamine 1-phosphate + CoA + H(+). The enzyme catalyses N-acetyl-alpha-D-glucosamine 1-phosphate + UTP + H(+) = UDP-N-acetyl-alpha-D-glucosamine + diphosphate. It participates in nucleotide-sugar biosynthesis; UDP-N-acetyl-alpha-D-glucosamine biosynthesis; N-acetyl-alpha-D-glucosamine 1-phosphate from alpha-D-glucosamine 6-phosphate (route II): step 2/2. It functions in the pathway nucleotide-sugar biosynthesis; UDP-N-acetyl-alpha-D-glucosamine biosynthesis; UDP-N-acetyl-alpha-D-glucosamine from N-acetyl-alpha-D-glucosamine 1-phosphate: step 1/1. Its pathway is bacterial outer membrane biogenesis; LPS lipid A biosynthesis. Catalyzes the last two sequential reactions in the de novo biosynthetic pathway for UDP-N-acetylglucosamine (UDP-GlcNAc). The C-terminal domain catalyzes the transfer of acetyl group from acetyl coenzyme A to glucosamine-1-phosphate (GlcN-1-P) to produce N-acetylglucosamine-1-phosphate (GlcNAc-1-P), which is converted into UDP-GlcNAc by the transfer of uridine 5-monophosphate (from uridine 5-triphosphate), a reaction catalyzed by the N-terminal domain. This Xylella fastidiosa (strain M23) protein is Bifunctional protein GlmU.